Consider the following 670-residue polypeptide: DNA topoisomerase 6 subunit B (670 aa).

A disordered region spans residues 1–30 (MAGDDLVETKKGSSKNSKDSNESKLKQKSP). Residues 7-25 (VETKKGSSKNSKDSNESKL) are compositionally biased toward basic and acidic residues. Residues asparagine 60, aspartate 160, 181 to 182 (TK), 190 to 197 (GKFGLGAK), and lysine 516 each bind ATP.

It belongs to the TOP6B family. Homodimer. Heterotetramer of two TOP6A and two TOP6B subunits. Interacts with SPO11-2, but not with SPO11-1, RHL1 or BIN4. In terms of tissue distribution, highly expressed in leaves, stems, flowers and seedlings.

The protein localises to the nucleus. The enzyme catalyses ATP-dependent breakage, passage and rejoining of double-stranded DNA.. In terms of biological role, component of the DNA topoisomerase VI involved in chromatin organization and progression of endoreduplication cycles. Relaxes both positive and negative superturns and exhibits a strong decatenase activity. The B subunit binds ATP. Involved in cell-elongation processes. This chain is DNA topoisomerase 6 subunit B, found in Arabidopsis thaliana (Mouse-ear cress).